Consider the following 522-residue polypeptide: Glutathione reductase, mitochondrial (522 aa).

Residues 1 to 43 (MALLPRALSAGAGPSWRRAARAFRGFLLLLPEPAALTRALSRA) constitute a mitochondrion transit peptide. Residues S74 and G75 each contribute to the FAD site. S74 serves as a coordination point for glutathione. R81 is a glutathione binding site. E94 provides a ligand contact to FAD. At K97 the chain carries N6-acetyllysine. Residues T101, C102, and K110 each contribute to the FAD site. C102 and C107 are disulfide-bonded. Y158 is a binding site for glutathione. Residue A174 coordinates FAD. NADP(+) contacts are provided by A239, I242, E245, R262, R268, and G334. D375 is an FAD binding site. L381 contacts NADP(+). Position 383 (T383) interacts with FAD. R391 is a glutathione binding site. Residue V414 participates in NADP(+) binding. H511 serves as a coordination point for FAD. H511 (proton acceptor) is an active-site residue.

This sequence belongs to the class-I pyridine nucleotide-disulfide oxidoreductase family. In terms of assembly, homodimer; disulfide-linked. FAD serves as cofactor.

It localises to the mitochondrion. Its subcellular location is the cytoplasm. It carries out the reaction 2 glutathione + NADP(+) = glutathione disulfide + NADPH + H(+). Catalyzes the reduction of glutathione disulfide (GSSG) to reduced glutathione (GSH). Constitutes the major mechanism to maintain a high GSH:GSSG ratio in the cytosol. This chain is Glutathione reductase, mitochondrial (GSR), found in Homo sapiens (Human).